A 306-amino-acid chain; its full sequence is Curved DNA-binding protein (306 aa).

The 65-residue stretch at 5–69 folds into the J domain; sequence DYYAIMGVKP…QRRAEYDQLW (65 aa).

It is found in the cytoplasm. The protein resides in the nucleoid. Functionally, DNA-binding protein that preferentially recognizes a curved DNA sequence. It is probably a functional analog of DnaJ; displays overlapping activities with DnaJ, but functions under different conditions, probably acting as a molecular chaperone in an adaptive response to environmental stresses other than heat shock. Lacks autonomous chaperone activity; binds native substrates and targets them for recognition by DnaK. Its activity is inhibited by the binding of CbpM. This is Curved DNA-binding protein from Salmonella paratyphi A (strain ATCC 9150 / SARB42).